The primary structure comprises 55 residues: Trypsin inhibitor (55 aa).

The BPTI/Kunitz inhibitor domain occupies 4 to 54 (CLLPIKTGPCKGSFPRYAYDSSEDKCVEFIYGGCQANANNFETIEECEAAC). Intrachain disulfides connect C4/C54, C13/C37, and C29/C50.

As to quaternary structure, monomer. As to expression, expressed exclusively in the middle silk gland.

This cocoon shell-associated protein inhibits trypsin Activity by forming a low-dissociation complex with trypsin. May play an important part in regulating proteolytic activity in the silk gland or protecting silk proteins from degradation during histolysis. The sequence is that of Trypsin inhibitor from Bombyx mori (Silk moth).